The primary structure comprises 315 residues: Methionyl-tRNA formyltransferase (315 aa).

Positions 2-189 (SDSLRIIFAG…LITTLKQLAD (188 aa)) are N-terminal domain. Position 113–116 (113–116 (SLLP)) interacts with (6S)-5,6,7,8-tetrahydrofolate. The segment at 210–315 (KEEARIDWSL…EWFIPGNRLA (106 aa)) is C-terminal domain.

Belongs to the Fmt family.

The enzyme catalyses L-methionyl-tRNA(fMet) + (6R)-10-formyltetrahydrofolate = N-formyl-L-methionyl-tRNA(fMet) + (6S)-5,6,7,8-tetrahydrofolate + H(+). In terms of biological role, attaches a formyl group to the free amino group of methionyl-tRNA(fMet). The formyl group appears to play a dual role in the initiator identity of N-formylmethionyl-tRNA by promoting its recognition by IF2 and preventing the misappropriation of this tRNA by the elongation apparatus. The protein is Methionyl-tRNA formyltransferase of Salmonella typhi.